A 370-amino-acid chain; its full sequence is UDP-N-acetylglucosamine--N-acetylmuramyl-(pentapeptide) pyrophosphoryl-undecaprenol N-acetylglucosamine transferase (370 aa).

Residues T15–G17, N126, R169, S197, and Q299 contribute to the UDP-N-acetyl-alpha-D-glucosamine site.

The protein belongs to the glycosyltransferase 28 family. MurG subfamily.

It localises to the cell inner membrane. The catalysed reaction is di-trans,octa-cis-undecaprenyl diphospho-N-acetyl-alpha-D-muramoyl-L-alanyl-D-glutamyl-meso-2,6-diaminopimeloyl-D-alanyl-D-alanine + UDP-N-acetyl-alpha-D-glucosamine = di-trans,octa-cis-undecaprenyl diphospho-[N-acetyl-alpha-D-glucosaminyl-(1-&gt;4)]-N-acetyl-alpha-D-muramoyl-L-alanyl-D-glutamyl-meso-2,6-diaminopimeloyl-D-alanyl-D-alanine + UDP + H(+). It participates in cell wall biogenesis; peptidoglycan biosynthesis. Its function is as follows. Cell wall formation. Catalyzes the transfer of a GlcNAc subunit on undecaprenyl-pyrophosphoryl-MurNAc-pentapeptide (lipid intermediate I) to form undecaprenyl-pyrophosphoryl-MurNAc-(pentapeptide)GlcNAc (lipid intermediate II). The protein is UDP-N-acetylglucosamine--N-acetylmuramyl-(pentapeptide) pyrophosphoryl-undecaprenol N-acetylglucosamine transferase of Methylorubrum populi (strain ATCC BAA-705 / NCIMB 13946 / BJ001) (Methylobacterium populi).